A 230-amino-acid polypeptide reads, in one-letter code: Large ribosomal subunit protein uL1 (230 aa).

Belongs to the universal ribosomal protein uL1 family. Part of the 50S ribosomal subunit.

Its function is as follows. Binds directly to 23S rRNA. The L1 stalk is quite mobile in the ribosome, and is involved in E site tRNA release. Protein L1 is also a translational repressor protein, it controls the translation of the L11 operon by binding to its mRNA. The sequence is that of Large ribosomal subunit protein uL1 from Leptospira interrogans serogroup Icterohaemorrhagiae serovar copenhageni (strain Fiocruz L1-130).